Here is an 859-residue protein sequence, read N- to C-terminus: MQEQYNPSEIEALVQKHWHDNKTFEVTEDANKEKFYCLSMFPYPSGRLHMGHVRNYTIGDVVARFQRLQGKNVLQPIGWDSFGLPAENAAINNKTAPAPWTYENIEYMKNQLKLLGFGYDWSREIATCTPEYYRWEQWFFTKLYEKGLVYKKTASVNWCPNDETVLANEQVQDGCCWRCDTPVEQKEIPQWFIKITAYAEELLNDIDTLDGWPDQVKTMQRNWIGRSEGVEMTFGVAGHDKSFDIYTTRPDTLMGVTYVAIAAGHPLAEIAAHTNPELAAFIDECKNSTTSEAELATMEKRGVATGLFAIHPITGKQVPIWAANFVLMNYGTGAVMSVPGHDQRDFEFAKKYGLAIEAVIKPVDGDVDISEAAYTEKGVLFNSGEFDGLDFEAGFNAIANKLVAEGKGKRQVNYRLRDWGVSRQRYWGAPIPMVTLADGTVIPTPADQLPVLLPEDVVMDGIQSPIKADKEWAKTQVNGQDALRETDTFDTFMESSWYYARYCSPHADEMLDPAKANYWLPVDQYIGGIEHACMHLLYFRFFHKLLRDAGLVNSNEPAKQLLTQGMVLADAFYYINEKGARVWVSPLDVATTEKDDKGRITKAIDKDGNELVYTGMSKMSKSKNNGIDPQVMVEKYGADTVRLFMMFASPPELTLEWQESGVEGAHRFIKRLWKLANEHVNQDNSEALDVSTLTSDQKALRREVHKTIAKVTDDIGRRQMFNTAVAAVMELMNHLQKAPQTTGQDNAIIGEALSAIVRLLYPIIPHVSFNLWNELGNASNIEDSQWPVVDEAALVEDSKLIVVQVNGKVRAKITVAADADKESVEALGMSDEHVIKYLDGLTVRKVIYVPGKLLSIVAN.

The short motif at 42–52 (PYPSGRLHMGH) is the 'HIGH' region element. Positions 618-622 (KMSKS) match the 'KMSKS' region motif. Lys621 serves as a coordination point for ATP.

This sequence belongs to the class-I aminoacyl-tRNA synthetase family.

The protein localises to the cytoplasm. It catalyses the reaction tRNA(Leu) + L-leucine + ATP = L-leucyl-tRNA(Leu) + AMP + diphosphate. This is Leucine--tRNA ligase from Shewanella baltica (strain OS155 / ATCC BAA-1091).